The primary structure comprises 520 residues: BBSome complex member BBS4 (520 aa).

The disordered stretch occupies residues 1-26 (MAEVKLGMKTQVPASVESQKPRSKKA). Residues 1-66 (MAEVKLGMKT…EQLQETQGLC (66 aa)) form a required for localization to centrosomes region. TPR repeat units lie at residues 67-100 (EYAI…SPQC), 102-134 (DNLK…NQKD), 135-167 (WEIC…LNKH), 168-201 (DLTY…SPEN), 203-235 (ELLT…DPAN), 237-269 (KAIL…IPES), 270-303 (PPLW…APFD), 304-337 (WKIL…QPKM), 339-371 (ELYM…DKCN), and 373-408 (LVNL…LKDN). The interaction with PCM1 stretch occupies residues 101-337 (ADNLKQVARS…SAAINFQPKM (237 aa)). The interval 338 to 520 (GELYMLLAVA…TEASEQKKEK (183 aa)) is required for localization to centrosomes. Residues 488 to 520 (AQLPKPPSLPLEPEPEPTVEASPTEASEQKKEK) are disordered.

It belongs to the BBS4 family. In terms of assembly, part of BBSome complex, that contains BBS1, BBS2, BBS4, BBS5, BBS7, BBS8/TTC8, BBS9 and BBIP10. Interacts with PCM1 and DCTN1. Interacts with DC28B. Interacts with ALDOB and C2CD3. Interacts with PKD1. Interacts with CEP290. Interacts with DLEC1. Expressed in the hippocampus and dentate gyrus, the columnar epithelial cells of bronchioles, the olfactory epithelium and the inner segment and outer nuclear layer of the retina. Expressed in testis.

It localises to the cytoplasm. The protein localises to the cytoskeleton. The protein resides in the microtubule organizing center. It is found in the centrosome. Its subcellular location is the cell projection. It localises to the cilium membrane. The protein localises to the centriolar satellite. The protein resides in the cilium. It is found in the flagellum. Functionally, the BBSome complex is thought to function as a coat complex required for sorting of specific membrane proteins to the primary cilia. The BBSome complex is required for ciliogenesis but is dispensable for centriolar satellite function. This ciliogenic function is mediated in part by the Rab8 GDP/GTP exchange factor, which localizes to the basal body and contacts the BBSome. Rab8(GTP) enters the primary cilium and promotes extension of the ciliary membrane. Firstly the BBSome associates with the ciliary membrane and binds to RAB3IP/Rabin8, the guanosyl exchange factor (GEF) for Rab8 and then the Rab8-GTP localizes to the cilium and promotes docking and fusion of carrier vesicles to the base of the ciliary membrane. The BBSome complex, together with the LTZL1, controls SMO ciliary trafficking and contributes to the sonic hedgehog (SHH) pathway regulation. Required for proper BBSome complex assembly and its ciliary localization. Required for microtubule anchoring at the centrosome but not for microtubule nucleation. May be required for the dynein-mediated transport of pericentriolar proteins to the centrosome. The protein is BBSome complex member BBS4 (Bbs4) of Mus musculus (Mouse).